Consider the following 570-residue polypeptide: Periplasmic trehalase (570 aa).

A signal peptide spans M1 to A34. Substrate contacts are provided by residues R159, W166 to D167, N203, R212 to Q214, R284 to E286, and G317. Residues D319 and E503 each act as proton donor/acceptor in the active site. E518 lines the substrate pocket. Residues K544 to Q570 are disordered. Over residues P554–Q570 the composition is skewed to low complexity.

The protein belongs to the glycosyl hydrolase 37 family. As to quaternary structure, monomer.

Its subcellular location is the periplasm. It carries out the reaction alpha,alpha-trehalose + H2O = alpha-D-glucose + beta-D-glucose. Functionally, provides the cells with the ability to utilize trehalose at high osmolarity by splitting it into glucose molecules that can subsequently be taken up by the phosphotransferase-mediated uptake system. This is Periplasmic trehalase from Salmonella dublin (strain CT_02021853).